Here is a 283-residue protein sequence, read N- to C-terminus: Thymidylate synthase (283 aa).

Arginine 22 provides a ligand contact to dUMP. The active-site Nucleophile is cysteine 160. DUMP-binding positions include 180 to 183 (RSCD), asparagine 191, and 221 to 223 (HIY). Aspartate 183 serves as a coordination point for (6R)-5,10-methylene-5,6,7,8-tetrahydrofolate. Residue serine 282 coordinates (6R)-5,10-methylene-5,6,7,8-tetrahydrofolate.

Belongs to the thymidylate synthase family. Bacterial-type ThyA subfamily. As to quaternary structure, homodimer.

It is found in the cytoplasm. It carries out the reaction dUMP + (6R)-5,10-methylene-5,6,7,8-tetrahydrofolate = 7,8-dihydrofolate + dTMP. It functions in the pathway pyrimidine metabolism; dTTP biosynthesis. Functionally, catalyzes the reductive methylation of 2'-deoxyuridine-5'-monophosphate (dUMP) to 2'-deoxythymidine-5'-monophosphate (dTMP) while utilizing 5,10-methylenetetrahydrofolate (mTHF) as the methyl donor and reductant in the reaction, yielding dihydrofolate (DHF) as a by-product. This enzymatic reaction provides an intracellular de novo source of dTMP, an essential precursor for DNA biosynthesis. The polypeptide is Thymidylate synthase (Shewanella piezotolerans (strain WP3 / JCM 13877)).